We begin with the raw amino-acid sequence, 459 residues long: Prenyltransferase penI (459 aa).

L-tryptophan is bound by residues 107 to 108 and glutamate 111; that span reads VV. 5 residues coordinate substrate: arginine 126, arginine 276, lysine 278, tyrosine 280, and tyrosine 384.

It belongs to the tryptophan dimethylallyltransferase family.

The catalysed reaction is quinolinone B + dimethylallyl diphosphate = peniprequinolone + diphosphate. It functions in the pathway secondary metabolite biosynthesis. The protein operates within alkaloid biosynthesis. Its pathway is mycotoxin biosynthesis. Its function is as follows. Prenyltransferase; part of the gene cluster that mediates the biosynthesis of penigequinolones, potent insecticidal alkaloids that contain a highly modified 10-carbon prenyl group. The first stage is catalyzed by the nonribosomal peptide synthetase penN that condenses anthranilic acid and O-methyl-L-tyrosine to produce 4'-methoxycyclopeptin. 4'-methoxycyclopeptin is then converted to 4'-methoxydehydrocyclopeptin by the ketoglutarate-dependent dioxygenase penM through dehydrogenation to form a double bond between C-alpha and C-beta of the O-methyltyrosine side chain. PenM also converts its first product methoxydehydrocyclopeptin to 4'-methoxycyclopenin. The following conversion of 4'methoxycyclopenin into 4'-methoxyviridicatin is catalyzed by the cyclopenase penL. 4'-methoxyviridicatin is the precursor of quinolone natural products, and is further converted to quinolinone B. The prenyltransferase penI then catalyzes the canonical Friedel-Crafts alkylation of quinolinone B with dimethylallyl cation to yield dimethylallyl quinolone, which is subjected to FAD-dependent dehydrogenation by the FAD-linked oxidoreductase penH to yield conjugated aryl diene. The delta(3') double bond then serves as the site of the second alkylation with DMAPP catalyzed by the prenyltransferase penG to yield a carbenium ion intermediate, which can be attacked by H(2)O to yield a styrenyl quinolone containing a C3'-hydroxyprenyl chain, or undergo cyclization to yield yaequinolones J1 and J2. The conversion of the styrenyl quinolone into the tetrahydrofuran-containing yaequinolone C is performed by the FAD-dependent monooxygenase penE and involves epoxidation of the terminal C7'-C8' olefin, followed by epoxide ring opening initiated by the C3' hydroxyl group. The predicted cysteine hydrolase penJ acts as an epoxide hydrolase that enhances the rate of the 5-exo-tet cyclization step, increasing the yield of yaequinolone C. PenF catalyzes the cationic rearrangement of the epoxide formed by penE (before ring opening to produce yaequinolone C) into yaequinolone D. Finally, the short-chain dehydrogenase/reductase (SDR)-like reductase penD, catalyzes both the dehydration of yaequinolone D and the reduction of the resulting oxonium to yield penigequinolone. The polypeptide is Prenyltransferase penI (Penicillium thymicola).